A 471-amino-acid chain; its full sequence is 5-hydroxytryptamine receptor 2B (471 aa).

Topologically, residues 1–26 (MFQAAVGPLQTNISLPEETPGLELNW) are extracellular. An N-linked (GlcNAc...) asparagine glycan is attached at Asn-12. Residues 27-49 (AALLIVMVIIPTIGGNILVILAV) form a helical membrane-spanning segment. Residues 50 to 60 (WLEKKLQNATN) lie on the Cytoplasmic side of the membrane. A helical transmembrane segment spans residues 61–83 (FFLMSLAVADLLVGLLVMPIALI). Residues 84–99 (TILYDSDWPLPEPLCP) lie on the Extracellular side of the membrane. Cys-98 and Cys-182 form a disulfide bridge. Residues 100–121 (IWLFLDVLFSTASIMHLCAISL) traverse the membrane as a helical segment. 2 residues coordinate ergotamine: Asp-105 and Thr-110. The DRY motif; important for ligand-induced conformation changes signature appears at 122–124 (DRY). Over 122-141 (DRYIAIKKPIQHSQYKSRAK) the chain is Cytoplasmic. The chain crosses the membrane as a helical span at residues 142 to 162 (VMLKIALVWLISICIAIPIPI). The Extracellular portion of the chain corresponds to 163-191 (KGLRNYPHPNNITFTSNHTCVLKTDTFQE). N-linked (GlcNAc...) asparagine glycans are attached at residues Asn-173 and Asn-179. Leu-184 is an ergotamine binding site. The [DE]RFG motif; may stabilize a conformation that preferentially activates signaling via beta-arrestin family members signature appears at 187–190 (DTFQ). The chain crosses the membrane as a helical span at residues 192–214 (FIIFGSLVAFFIPLTIMMIIYFL). At 215–308 (TVRVLRKKVY…TLTNEQRASK (94 aa)) the chain is on the cytoplasmic side. The chain crosses the membrane as a helical span at residues 309–329 (VLGIVFLLFVVMWCPFFITNI). At 330–344 (TSALCGPCDANIIGR) the chain is on the extracellular side. A disulfide bond links Cys-334 and Cys-337. A helical membrane pass occupies residues 345–366 (LMEIFSWVGYVSSGINPLVYTL). Positions 360-364 (NPLVY) match the NPxxY motif; important for ligand-induced conformation changes and signaling motif. The Cytoplasmic segment spans residues 367-471 (FNKTFRQAFT…CKQEERVSCV (105 aa)). A lipid anchor (S-palmitoyl cysteine) is attached at Cys-381. The PDZ-binding signature appears at 469 to 471 (SCV).

This sequence belongs to the G-protein coupled receptor 1 family. Detected in brain, heart and gut.

The protein resides in the cell membrane. It localises to the synapse. It is found in the synaptosome. In terms of biological role, G-protein coupled receptor for 5-hydroxytryptamine (serotonin). Also functions as a receptor for various ergot alkaloid derivatives and psychoactive substances. Ligand binding causes a conformation change that triggers signaling via guanine nucleotide-binding proteins (G proteins) and modulates the activity of downstream effectors. HTR2B is coupled to G(q)/G(11) G alpha proteins and activates phospholipase C-beta, releasing diacylglycerol (DAG) and inositol 1,4,5-trisphosphate (IP3) second messengers that modulate the activity of phosphatidylinositol 3-kinase and promote the release of Ca(2+) ions from intracellular stores, respectively. Beta-arrestin family members inhibit signaling via G proteins and mediate activation of alternative signaling pathways. Plays a role in the regulation of dopamine and 5-hydroxytryptamine release, 5-hydroxytryptamine uptake and in the regulation of extracellular dopamine and 5-hydroxytryptamine levels, and thereby affects neural activity. The protein is 5-hydroxytryptamine receptor 2B (htr2b) of Dichotomyctere fluviatilis (Green pufferfish).